The primary structure comprises 666 residues: MGQTKSKIKSKYASYLSFIKILLKRGGVKVSTKNLIKLFQIIEQFCPWFPEQGTLDLKDWKRIGKELKQAGRKGNIIPLTVWNDWAIIKAALEPFQTEEDSISVSDAPGSGIIDCNEKTRKKSQKETESLHCEYVAEPVMAQSTQNVDYNQLQEVIYPETLKLEGKGPELVGPSESKPRGTSPLPAGQVPVTLQPQKQVKENKTQPPVAYQYWPPAELQYRPPPESQYGYPGMPPAPQGRAPYPQPPTRRLNPTAPPSRQGSELHEIIDKSRKEGDTEAWQFPVTLEPMPPGEGAQEGEPPTVEARYKSFSIKILKDMKEGVKQYGPNSPYMRTLLDSIAHGHRLIPYDWEILAKSSLSPSQFLQFKTWWIDGVQEQVRRNRAANPPVNIDADQLLGIGQNWSTISQQALMQNEAIEQVRAICLRAWEKIQDPGSTCPSFNTVRQGSKEPYPDFVARLQDVAQKSIADEKARKVIVELMAYENANPECQSAIKPLKGKVPAGSDVISEYVKACDGIGGAMHKAMLMAQAITGVVLGGQVRTFGGKCYNCGQIGHLKKNCPVLNKQNITIQATTTGREPPDLCPRCKKGKHWASQCRSKFDKNGQPLSGNEQRGQPQAPQQTGAFPIQPFVPQGFQGQQPPLSQVFQGISQLPQYNNCPPPQVAVQQ.

G2 carries N-myristoyl glycine lipidation. The segment at 165–264 is disordered; it reads GKGPELVGPS…APPSRQGSEL (100 aa). The segment covering 232–247 has biased composition (pro residues); that stretch reads GMPPAPQGRAPYPQPP. 2 consecutive CCHC-type zinc fingers follow at residues 544 to 561 and 580 to 597; these read GKCY…NCPV and DLCP…QCRS. The disordered stretch occupies residues 598–641; sequence KFDKNGQPLSGNEQRGQPQAPQQTGAFPIQPFVPQGFQGQQPPL. Residues 604-622 are compositionally biased toward polar residues; sequence QPLSGNEQRGQPQAPQQTG. The segment covering 624-640 has biased composition (low complexity); that stretch reads FPIQPFVPQGFQGQQPP.

It belongs to the beta type-B retroviral Gag protein family. HERV class-II K(HML-2) gag subfamily. In terms of processing, myristoylation is essential for retroviral assembly. Alteration of the glycine residue leads to a block in the budding of particles and an accumulation of Gag inside the cell. Specific enzymatic cleavages may yield mature proteins.

The protein localises to the cell membrane. Its function is as follows. The products of the Gag polyproteins of infectious retroviruses perform highly complex orchestrated tasks during the assembly, budding, maturation, and infection stages of the viral replication cycle. During viral assembly, the proteins form membrane associations and self-associations that ultimately result in budding of an immature virion from the infected cell. Gag precursors also function during viral assembly to selectively bind and package two plus strands of genomic RNA. Endogenous Gag proteins may have kept, lost or modified their original function during evolution. The polypeptide is Endogenous retrovirus group K member 9 Gag polyprotein (ERVK-9) (Homo sapiens (Human)).